Here is an 802-residue protein sequence, read N- to C-terminus: Aldehyde dehydrogenase family 16 member A1 (802 aa).

This sequence belongs to the aldehyde dehydrogenase family. Interacts with SPG21.

This Mus musculus (Mouse) protein is Aldehyde dehydrogenase family 16 member A1 (Aldh16a1).